Reading from the N-terminus, the 578-residue chain is Probable multidrug ABC transporter ATP-binding protein YbhF (578 aa).

ABC transporter domains are found at residues 6–237 and 330–559; these read ITLN…LMTS and IEAK…PDPT. ATP contacts are provided by residues 40–47 and 362–369; these read GPDGAGKT and GPNGAGKS.

Belongs to the ABC transporter superfamily. The complex is probably composed of two ATP-binding proteins (YbhF) and two transmembrane proteins (YbhR and YbhS).

Part of the ABC transporter complex YbhFSR that could be involved in efflux of cefoperazone. Probably responsible for energy coupling to the transport system. In Escherichia coli (strain K12), this protein is Probable multidrug ABC transporter ATP-binding protein YbhF (ybhF).